The chain runs to 316 residues: tRNA dimethylallyltransferase (316 aa).

17-24 (GPTASGKT) contributes to the ATP binding site. 19–24 (TASGKT) lines the substrate pocket. 3 interaction with substrate tRNA regions span residues 42–45 (DSAL), 166–170 (QRLSR), and 247–252 (RCVGYR).

This sequence belongs to the IPP transferase family. Monomer. The cofactor is Mg(2+).

The catalysed reaction is adenosine(37) in tRNA + dimethylallyl diphosphate = N(6)-dimethylallyladenosine(37) in tRNA + diphosphate. Catalyzes the transfer of a dimethylallyl group onto the adenine at position 37 in tRNAs that read codons beginning with uridine, leading to the formation of N6-(dimethylallyl)adenosine (i(6)A). This chain is tRNA dimethylallyltransferase, found in Salmonella typhi.